A 188-amino-acid chain; its full sequence is MADLARLTALIEPEAKALGFELVRVKMMPSEAGDGGQALQIMAEDPATGQLLIEQCAELSRKVSDVIDAAEESGEVLIEGAYHLEVSSPGIDRPLTRPKDFADWAGHEAKVSLVEKIDGHRNMRGILLGIDGETVTIADNRAGEVSFALEQIHSAKLVLTDKLIAATQPLDADGAEEVLEDKEEKADD.

It belongs to the RimP family.

The protein resides in the cytoplasm. In terms of biological role, required for maturation of 30S ribosomal subunits. In Erythrobacter litoralis (strain HTCC2594), this protein is Ribosome maturation factor RimP.